The primary structure comprises 497 residues: uncharacterized protein (497 aa).

Over residues 1 to 16 (MSTTTETVTWSQYKPQ) the composition is skewed to polar residues. The tract at residues 1-29 (MSTTTETVTWSQYKPQETQRRLSRSSTIT) is disordered. S64 bears the Phosphoserine mark. 6 consecutive transmembrane segments (helical) span residues 86–106 (IALVLLNNLMSEMSLTIALPI), 120–140 (FSGLVIGIPTMISLVCLYPML), 155–175 (FRPLIVSCISQIIGHLLYSLA), 180–200 (WLYLILIGRMCSGVGFTMFLY), 222–242 (LNILAQILGSMAGAFLGGILA), and 258–278 (AGSWFMLFIWIVYSIFLSIFF). Position 295 is a phosphoserine (S295). 6 helical membrane-spanning segments follow: residues 309–329 (FMLCFLSMAAFISIFNVAGYQ), 348–368 (GNFLSLSSLVIAPFVFFSTFL), 377–397 (IMLYGFMMGIVALIVHLVLDA), 407–427 (FVLYSIMQFGFSVGSAPLVSL), 443–463 (VVQVGISIGETVGSICGGAIF), and 468–488 (VGFIAMNLGIALLVFIQLLYL).

Its subcellular location is the membrane. This is an uncharacterized protein from Schizosaccharomyces pombe (strain 972 / ATCC 24843) (Fission yeast).